The primary structure comprises 232 residues: uncharacterized protein (232 aa).

This is an uncharacterized protein from Eriophyes pyri (pearleaf blister mite).